The primary structure comprises 481 residues: Proline--tRNA ligase (481 aa).

This sequence belongs to the class-II aminoacyl-tRNA synthetase family. ProS type 3 subfamily. Homodimer.

It is found in the cytoplasm. It carries out the reaction tRNA(Pro) + L-proline + ATP = L-prolyl-tRNA(Pro) + AMP + diphosphate. In terms of biological role, catalyzes the attachment of proline to tRNA(Pro) in a two-step reaction: proline is first activated by ATP to form Pro-AMP and then transferred to the acceptor end of tRNA(Pro). This chain is Proline--tRNA ligase, found in Chlorobium phaeobacteroides (strain BS1).